The following is a 233-amino-acid chain: 5'-methylthioadenosine/S-adenosylhomocysteine nucleosidase (233 aa).

The Proton acceptor role is filled by Glu12. Substrate is bound by residues Gly78, Ile152, and Met173–Glu174. The active-site Proton donor is the Asp197.

Belongs to the PNP/UDP phosphorylase family. MtnN subfamily. In terms of assembly, homodimer.

The catalysed reaction is S-adenosyl-L-homocysteine + H2O = S-(5-deoxy-D-ribos-5-yl)-L-homocysteine + adenine. The enzyme catalyses S-methyl-5'-thioadenosine + H2O = 5-(methylsulfanyl)-D-ribose + adenine. It catalyses the reaction 5'-deoxyadenosine + H2O = 5-deoxy-D-ribose + adenine. The protein operates within amino-acid biosynthesis; L-methionine biosynthesis via salvage pathway; S-methyl-5-thio-alpha-D-ribose 1-phosphate from S-methyl-5'-thioadenosine (hydrolase route): step 1/2. In terms of biological role, catalyzes the irreversible cleavage of the glycosidic bond in both 5'-methylthioadenosine (MTA) and S-adenosylhomocysteine (SAH/AdoHcy) to adenine and the corresponding thioribose, 5'-methylthioribose and S-ribosylhomocysteine, respectively. Also cleaves 5'-deoxyadenosine, a toxic by-product of radical S-adenosylmethionine (SAM) enzymes, into 5-deoxyribose and adenine. Thus, is required for in vivo function of the radical SAM enzymes biotin synthase and lipoic acid synthase, that are inhibited by 5'-deoxyadenosine accumulation. In Yersinia pestis bv. Antiqua (strain Angola), this protein is 5'-methylthioadenosine/S-adenosylhomocysteine nucleosidase.